The sequence spans 168 residues: Putative peroxiredoxin prxA (168 aa).

Residues 4–158 (LKAGDSFPAD…LEPAKNHLEF (155 aa)) enclose the Thioredoxin domain. Cys61 serves as the catalytic Cysteine sulfenic acid (-SOH) intermediate.

The protein belongs to the peroxiredoxin family. Prx5 subfamily. In terms of assembly, homodimer; disulfide-linked, upon oxidation. Interacts with thioredoxin trxA.

The enzyme catalyses a hydroperoxide + [thioredoxin]-dithiol = an alcohol + [thioredoxin]-disulfide + H2O. Its function is as follows. Thiol-specific peroxidase that catalyzes the reduction of hydrogen peroxide and organic hydroperoxides to water and alcohols, respectively. Plays a role in cell protection against oxidative stress by detoxifying peroxides and as sensor of hydrogen peroxide-mediated signaling events. Involved in osmoadaptation. The polypeptide is Putative peroxiredoxin prxA (Emericella nidulans (strain FGSC A4 / ATCC 38163 / CBS 112.46 / NRRL 194 / M139) (Aspergillus nidulans)).